Here is a 244-residue protein sequence, read N- to C-terminus: Myosin-7 (244 aa).

The tract at residues 1-244 (VEQTERSRKL…DIGTKGLNEE (244 aa)) is rodlike tail (S2 and LMM domains). Residues 1 to 244 (VEQTERSRKL…DIGTKGLNEE (244 aa)) are a coiled coil. Positions 216–244 (EERADIAESQVNKLRAKSRDIGTKGLNEE) are disordered. The span at 232–244 (KSRDIGTKGLNEE) shows a compositional bias: basic and acidic residues.

As to quaternary structure, muscle myosin is a hexameric protein that consists of 2 heavy chain subunits (MHC), 2 alkali light chain subunits (MLC) and 2 regulatory light chain subunits (MLC-2). Interacts with ECPAS. Interacts (via C-terminus) with LRRC39.

It is found in the cytoplasm. The protein localises to the myofibril. It localises to the sarcomere. Myosins are actin-based motor molecules with ATPase activity essential for muscle contraction. Forms regular bipolar thick filaments that, together with actin thin filaments, constitute the fundamental contractile unit of skeletal and cardiac muscle. This Papio hamadryas (Hamadryas baboon) protein is Myosin-7 (MYH7).